Here is a 348-residue protein sequence, read N- to C-terminus: MGIRIQELCKQFEDFTALAGIDLDIRQGELLALLGPSGSGKTTLLRIIAGLEHADAGRVLFGDEDATMMSVQARRVGFVFQHYALFKHMSVYENVAFGLRVRRGKARWPESQISARVFELLSLVQLDGLEQRYPMQLSGGQRQRVALARALAIEPRVLLLDEPFGALDAQVRRDLRRWLREIHDRTGLTTVFVTHDQEEALELADRVAILNQGRIEQVASPAEVYNRPSSPFVYSFVGAVNRLPGCVGADGLEVAGIVLSCPPQLSGWGAVDLYVRPEDLVLDAQEGWLAIVLWSQRSGPRMRVRARLEHSAHEVEIELSSATDEYVEGQKLRLIPRHYGVFFSESGG.

Residues 3–237 (IRIQELCKQF…PSSPFVYSFV (235 aa)) form the ABC transporter domain. 35 to 42 (GPSGSGKT) serves as a coordination point for ATP.

The protein belongs to the ABC transporter superfamily. Sulfate/tungstate importer (TC 3.A.1.6) family. The complex is composed of two ATP-binding proteins (CysA), two transmembrane proteins (CysT and CysW) and a solute-binding protein (CysP).

The protein localises to the cell inner membrane. The catalysed reaction is sulfate(out) + ATP + H2O = sulfate(in) + ADP + phosphate + H(+). The enzyme catalyses thiosulfate(out) + ATP + H2O = thiosulfate(in) + ADP + phosphate + H(+). Part of the ABC transporter complex CysAWTP involved in sulfate/thiosulfate import. Responsible for energy coupling to the transport system. This chain is Sulfate/thiosulfate import ATP-binding protein CysA, found in Xylella fastidiosa (strain 9a5c).